We begin with the raw amino-acid sequence, 136 residues long: Cytidine deaminase (136 aa).

The region spanning 1-128 (MNRQELITEA…ELLPGAFSSE (128 aa)) is the CMP/dCMP-type deaminase domain. Residue 42–44 (NIE) participates in substrate binding. C53 lines the Zn(2+) pocket. E55 functions as the Proton donor in the catalytic mechanism. Zn(2+)-binding residues include C86 and C89.

Belongs to the cytidine and deoxycytidylate deaminase family. As to quaternary structure, homotetramer. Zn(2+) serves as cofactor.

The catalysed reaction is cytidine + H2O + H(+) = uridine + NH4(+). It carries out the reaction 2'-deoxycytidine + H2O + H(+) = 2'-deoxyuridine + NH4(+). Functionally, this enzyme scavenges exogenous and endogenous cytidine and 2'-deoxycytidine for UMP synthesis. The polypeptide is Cytidine deaminase (cdd) (Bacillus subtilis (strain 168)).